The primary structure comprises 159 residues: SGTTDFYRRIITSEASASTLSLENFXHRVTESINMYEKCFKNETMRKCVYDRSLSLLSGVRLRIGLYWIYLQDWFSVFPKENFYIIKTEDYAKCLKCTFKKVYRFLGLPQLNRTNEAFMESIPKANTRRFKDTKMGKMWKETYELLEKFYQPHNERLVK.

Residues 1-159 are Lumenal-facing; that stretch reads SGTTDFYRRI…YQPHNERLVK (159 aa). Residues Asn42 and Asn112 are each glycosylated (N-linked (GlcNAc...) asparagine).

It belongs to the sulfotransferase 1 family. A divalent metal cation serves as cofactor. Glutathione is required as a cofactor.

The protein resides in the golgi apparatus membrane. It catalyses the reaction dermatan 4'-sulfate + n 3'-phosphoadenylyl sulfate = dermatan 4',6'-bissulfate + n adenosine 3',5'-bisphosphate + n H(+). The catalysed reaction is chondroitin 4'-sulfate + n 3'-phosphoadenylyl sulfate = chondroitin 4',6'-bissulfate + n adenosine 3',5'-bisphosphate + n H(+). Sulfotransferase that transfers sulfate from 3'-phosphoadenosine 5'-phosphosulfate (PAPS) to the C-6 hydroxyl group of the GalNAc 4-sulfate residue of chondroitin sulfate A and forms chondroitin sulfate E containing GlcA-GalNAc(4,6-SO(4)) repeating units. The sequence is that of Carbohydrate sulfotransferase 15 (GALNAC4S6ST) from Nototodarus sloanii (Wellington flying squid).